The primary structure comprises 179 residues: SCAN domain-containing protein 1 (179 aa).

Residues 1-107 (MAATEPILAT…AGSRLGPETF (107 aa)) are disordered. The segment covering 52–80 (SPNAAVPEAIPTPRAAASAALELPLGPAP) has biased composition (low complexity). One can recognise an SCAN box domain in the interval 108–166 (RQRFRQFRYQDAAGPREAFRQLRELSRQWLRPDIRTKEQIVEMLVQEQLLAILPEAARA).

In terms of assembly, interacts with ZNF202.

The protein resides in the nucleus. Its function is as follows. May regulate transcriptional activity. This Pan paniscus (Pygmy chimpanzee) protein is SCAN domain-containing protein 1 (SCAND1).